The primary structure comprises 519 residues: Bifunctional purine biosynthesis protein PurH (519 aa).

Residues 1–145 form the MGS-like domain; the sequence is MQPIQRALIS…KNHASVTVVV (145 aa).

This sequence belongs to the PurH family.

It catalyses the reaction (6R)-10-formyltetrahydrofolate + 5-amino-1-(5-phospho-beta-D-ribosyl)imidazole-4-carboxamide = 5-formamido-1-(5-phospho-D-ribosyl)imidazole-4-carboxamide + (6S)-5,6,7,8-tetrahydrofolate. The enzyme catalyses IMP + H2O = 5-formamido-1-(5-phospho-D-ribosyl)imidazole-4-carboxamide. Its pathway is purine metabolism; IMP biosynthesis via de novo pathway; 5-formamido-1-(5-phospho-D-ribosyl)imidazole-4-carboxamide from 5-amino-1-(5-phospho-D-ribosyl)imidazole-4-carboxamide (10-formyl THF route): step 1/1. It participates in purine metabolism; IMP biosynthesis via de novo pathway; IMP from 5-formamido-1-(5-phospho-D-ribosyl)imidazole-4-carboxamide: step 1/1. This Allochromatium vinosum (strain ATCC 17899 / DSM 180 / NBRC 103801 / NCIMB 10441 / D) (Chromatium vinosum) protein is Bifunctional purine biosynthesis protein PurH.